The following is an 833-amino-acid chain: DNA gyrase subunit A (833 aa).

The region spanning 35–498 is the Topo IIA-type catalytic domain; the sequence is LPDVRDGMKP…SEDMFEDEDL (464 aa). Tyr123 functions as the O-(5'-phospho-DNA)-tyrosine intermediate in the catalytic mechanism. The short motif at 525-531 is the GyrA-box element; sequence QKRGGRG. The disordered stretch occupies residues 803 to 833; that stretch reads RVDIEDDELDEDESIEEERDDRSEVEQGENE. The segment covering 806–821 has biased composition (acidic residues); it reads IEDDELDEDESIEEER.

The protein belongs to the type II topoisomerase GyrA/ParC subunit family. Heterotetramer, composed of two GyrA and two GyrB chains. In the heterotetramer, GyrA contains the active site tyrosine that forms a transient covalent intermediate with DNA, while GyrB binds cofactors and catalyzes ATP hydrolysis.

The protein resides in the cytoplasm. The catalysed reaction is ATP-dependent breakage, passage and rejoining of double-stranded DNA.. Its function is as follows. A type II topoisomerase that negatively supercoils closed circular double-stranded (ds) DNA in an ATP-dependent manner to modulate DNA topology and maintain chromosomes in an underwound state. Negative supercoiling favors strand separation, and DNA replication, transcription, recombination and repair, all of which involve strand separation. Also able to catalyze the interconversion of other topological isomers of dsDNA rings, including catenanes and knotted rings. Type II topoisomerases break and join 2 DNA strands simultaneously in an ATP-dependent manner. This is DNA gyrase subunit A from Halalkalibacterium halodurans (strain ATCC BAA-125 / DSM 18197 / FERM 7344 / JCM 9153 / C-125) (Bacillus halodurans).